The chain runs to 416 residues: Phakinin (416 aa).

A disordered region spans residues 1 to 48 (MSKRRVAADLPSGTNSSMPVQRHRVSSLRGTHSPSSLDSPPASRTSAV). Ser2 carries the post-translational modification N-acetylserine. Residues 2 to 115 (SKRRVAADLP…HTTVEDLGGC (114 aa)) are head. A phosphoserine mark is found at Ser27, Ser33, Ser36, and Ser91. The span at 28-48 (LRGTHSPSSLDSPPASRTSAV) shows a compositional bias: polar residues. Residues 105–416 (DHTTVEDLGG…HALLDREENN (312 aa)) enclose the IF rod domain. 3 coiled-coil regions span residues 116-146 (LVEY…SKAK), 170-249 (LENA…VKVL), and 308-402 (QTQE…LQKD). A tail region spans residues 397-416 (SQLQKDVASYHALLDREENN).

Belongs to the intermediate filament family. As to quaternary structure, part of a complex required for lens intermediate filament formation composed of BFSP1, BFSP2 and CRYAA. Found in a complex composed of PPL (via C-terminal linker domain), BFSP1 and BFSP2 in the retinal lens. Within the complex interacts with PPL (via C-terminal linker domain) and with BFSP1. Identified in a complex that contains VIM, EZR, AHNAK, BFSP1, BFSP2, ANK2, PLEC, PRX and spectrin. Interacts with LGSN. Interacts with VIM. Detected in retina lens fiber cells (at protein level). Also expressed in the lens epithelium, abundantly expressed in the anterior and anterolateral epithelium, less frequently expressed nearer the lens coronal equator (at protein level).

The protein localises to the cell membrane. The protein resides in the cytoplasm. It localises to the cytoskeleton. Its subcellular location is the cell cortex. Functionally, required for the correct formation of lens intermediate filaments as part of a complex composed of BFSP1, BFSP2 and CRYAA. Plays a role in maintenance of retinal lens optical clarity. In Mus musculus (Mouse), this protein is Phakinin (Bfsp2).